The sequence spans 390 residues: Copper-containing nitrite reductase (390 aa).

Residues 1–18 form the signal peptide; the sequence is MKRQALAAMIASLFALAA. Cys19 carries N-palmitoyl cysteine lipidation. A lipid anchor (S-diacylglycerol cysteine) is attached at Cys19. The tract at residues 30–51 is disordered; it reads ETPAAAAEAASSAAQTAAETPS. 2 Plastocyanin-like domains span residues 101-195 and 245-346; these read WTFD…ILVE and GHVG…LKVE. 6 residues coordinate Cu cation: His134, His139, His174, Cys175, His183, and Met188. Substrate is bound at residue His139. Position 280 (His280) interacts with substrate. His329 serves as a coordination point for Cu cation. The tract at residues 367 to 390 is disordered; that stretch reads GAAPAASAPAASAPAASASEKSVY. Over residues 368–390 the composition is skewed to low complexity; it reads AAPAASAPAASAPAASASEKSVY. A run of 3 repeats spans residues 371–375, 376–380, and 381–385. Residues 371–385 form a 3 X 5 AA tandem repeats of A-A-S-A-P region; it reads AASAPAASAPAASAS.

This sequence belongs to the multicopper oxidase family. In terms of assembly, homotrimer. Cu(+) is required as a cofactor. The cofactor is Cu(2+).

It localises to the cell outer membrane. It carries out the reaction nitric oxide + Fe(III)-[cytochrome c] + H2O = Fe(II)-[cytochrome c] + nitrite + 2 H(+). In terms of biological role, catalyzes the reduction of nitrite to nitric oxide (NO). It could be essential for growth and survival in oxygen-depleted environments. The protein is Copper-containing nitrite reductase (aniA) of Neisseria meningitidis serogroup B (strain ATCC BAA-335 / MC58).